A 53-amino-acid chain; its full sequence is ATP synthase protein 8 (53 aa).

Residues 5-25 (APISWLTLFFVFSITLVIFNI) traverse the membrane as a helical segment.

It belongs to the ATPase protein 8 family. As to quaternary structure, F-type ATPases have 2 components, CF(1) - the catalytic core - and CF(0) - the membrane proton channel.

The protein localises to the mitochondrion membrane. Mitochondrial membrane ATP synthase (F(1)F(O) ATP synthase or Complex V) produces ATP from ADP in the presence of a proton gradient across the membrane which is generated by electron transport complexes of the respiratory chain. F-type ATPases consist of two structural domains, F(1) - containing the extramembraneous catalytic core and F(0) - containing the membrane proton channel, linked together by a central stalk and a peripheral stalk. During catalysis, ATP synthesis in the catalytic domain of F(1) is coupled via a rotary mechanism of the central stalk subunits to proton translocation. Part of the complex F(0) domain. Minor subunit located with subunit a in the membrane. The chain is ATP synthase protein 8 from Aedes aegypti (Yellowfever mosquito).